Reading from the N-terminus, the 147-residue chain is Large ribosomal subunit protein uL16 (147 aa).

Belongs to the universal ribosomal protein uL16 family. Part of the 50S ribosomal subunit.

In terms of biological role, binds 23S rRNA and is also seen to make contacts with the A and possibly P site tRNAs. In Caldicellulosiruptor bescii (strain ATCC BAA-1888 / DSM 6725 / KCTC 15123 / Z-1320) (Anaerocellum thermophilum), this protein is Large ribosomal subunit protein uL16.